The sequence spans 296 residues: Magnetosome protein MamB (296 aa).

The Cytoplasmic portion of the chain corresponds to 1-12 (MKFENCRDCREE). The interval 1–214 (MKFENCRDCR…GLMDSSVDTE (214 aa)) is transmembrane domain (TMD). Residues 13–33 (VVWWAFTADICMTLFKGVLGL) traverse the membrane as a helical segment. Over 34–83 (MSGSVALVADSLHSGADVVASGVTQLSLKISNKPADERYPFGYGNIQYIS) the chain is Lumenal. A helical transmembrane segment spans residues 84–104 (SSIVGSLLLIGASFLMYGSVM). Residues 105-112 (KLISGTYE) lie on the Cytoplasmic side of the membrane. A helical membrane pass occupies residues 113–133 (APSIFAAVGASVTVIVNELMY). Topologically, residues 134–164 (RYQICVGNENNSPAIIANAWDNRSDAISSAA) are lumenal. The chain crosses the membrane as a helical span at residues 165–185 (VMVGVIASVIGFPIADTIAAI). The Cytoplasmic segment spans residues 186–296 (GVSALVGRIG…SPAPAAAARA (111 aa)). The C-terminal domain (CTD) stretch occupies residues 215–296 (LLQTAWQVAM…SPAPAAAARA (82 aa)).

It belongs to the cation diffusion facilitator (CDF) transporter (TC 2.A.4) family. Forms heterodimers with MamM. Probably interacts with MamE.

Its subcellular location is the magnetosome membrane. Its function is as follows. Plays a dual, essential role in magnetosome formation; required for magnetosome vesicle formation as well as biomineralization. Probably binds and transports iron. Requires heterodimerization with MamM for stability. The chain is Magnetosome protein MamB (mamB) from Paramagnetospirillum magneticum (strain ATCC 700264 / AMB-1) (Magnetospirillum magneticum).